We begin with the raw amino-acid sequence, 299 residues long: Probable alpha-L-glutamate ligase 2 (299 aa).

Residues 104–287 form the ATP-grasp domain; the sequence is MQLMSRRGIG…VAGAIIEFVE (184 aa). Residues Lys-141, 178–179, Asp-187, and 211–213 each bind ATP; these read EY and RSN. Residues Asp-248, Glu-260, and Asn-262 each contribute to the Mg(2+) site. Mn(2+) contacts are provided by Asp-248, Glu-260, and Asn-262.

The protein belongs to the RimK family. Requires Mg(2+) as cofactor. It depends on Mn(2+) as a cofactor.

The sequence is that of Probable alpha-L-glutamate ligase 2 from Shewanella sp. (strain MR-4).